A 262-amino-acid chain; its full sequence is 3-methyl-2-oxobutanoate hydroxymethyltransferase (262 aa).

The Mg(2+) site is built by D44 and D83. Residues 44–45 (DS), D83, and K112 each bind 3-methyl-2-oxobutanoate. E114 contacts Mg(2+). The active-site Proton acceptor is E180.

This sequence belongs to the PanB family. In terms of assembly, homodecamer; pentamer of dimers. Mg(2+) serves as cofactor.

The protein localises to the cytoplasm. It carries out the reaction 3-methyl-2-oxobutanoate + (6R)-5,10-methylene-5,6,7,8-tetrahydrofolate + H2O = 2-dehydropantoate + (6S)-5,6,7,8-tetrahydrofolate. It participates in cofactor biosynthesis; (R)-pantothenate biosynthesis; (R)-pantoate from 3-methyl-2-oxobutanoate: step 1/2. Its function is as follows. Catalyzes the reversible reaction in which hydroxymethyl group from 5,10-methylenetetrahydrofolate is transferred onto alpha-ketoisovalerate to form ketopantoate. This chain is 3-methyl-2-oxobutanoate hydroxymethyltransferase, found in Chromobacterium violaceum (strain ATCC 12472 / DSM 30191 / JCM 1249 / CCUG 213 / NBRC 12614 / NCIMB 9131 / NCTC 9757 / MK).